The primary structure comprises 856 residues: Mechanosensitive ion channel protein 6 (856 aa).

Disordered regions lie at residues 45–86 (GEGN…DPPT) and 116–226 (RGLT…PFAA). 2 stretches are compositionally biased toward basic and acidic residues: residues 70–85 (QQKDEGFEFRRGEDPP) and 129–140 (TKRDPVGRRDSR). Residues 155–168 (SGNNAPIQRSSSTL) show a composition bias toward polar residues. Phosphoserine is present on serine 211. Over residues 217–226 (EEEEDDPFAA) the composition is skewed to acidic residues. Helical transmembrane passes span 242–262 (IVLEWLSLILIIAGFVCTLAI), 283–303 (LVLICGRLVSSWIVKIVVFFI), 323–343 (AVQNCLWLGLVLLAWHFLFDE), and 360–380 (IFVCLLVGFLLWLVKTLLVKV). At serine 462 the chain carries Phosphoserine. A run of 2 helical transmembrane segments spans residues 615 to 635 (MVNIVVGIIILVIWLIILGIT) and 651 to 671 (AFIFGNMCKIVFESIIYLFVI).

The protein belongs to the MscS (TC 1.A.23) family.

It localises to the membrane. Its function is as follows. Mechanosensitive channel that opens in response to stretch forces in the membrane lipid bilayer. The polypeptide is Mechanosensitive ion channel protein 6 (MSL6) (Arabidopsis thaliana (Mouse-ear cress)).